The sequence spans 212 residues: F-box protein GID2 (212 aa).

A disordered region spans residues 1 to 74; that stretch reads MKFRSDSSGG…AGEGEQPRVP (74 aa). The segment covering 35–59 has biased composition (low complexity); it reads DPSSSSSQGEASSSSQPPPQQQQEE. The F-box domain occupies 70-116; it reads QPRVPDLGEDLVFEVLRRAEARTLAAAACVSRGWRQLAEDERLWEAA.

As to quaternary structure, part of some SCF(GID2) complex, which consist of a SKP1 protein, CUL1, GID2 and some RING box protein. Interacts directly with SKP2 and SKP15. Interacts directly with DELLA protein SLR1. May have a higher affinity for phosphorylated SLR1 proteins. As to expression, widely expressed. Preferentially expressed in unopened flowers, shoot apices and elongation stem. Expressed at lower level in the leaf blades, leaf sheaths, roots and rachis.

The protein localises to the nucleus. It participates in protein modification; protein ubiquitination. Its function is as follows. Essential component of some SCF-type E3 ligase complex that positively regulates the gibberellin signaling pathway. Upon gibberellin treatment, the complex mediates the ubiquitination and subsequent degradation of DELLA protein SLR1, a repressor of the gibberellin pathway, leading to activate the pathway. This Oryza sativa subsp. japonica (Rice) protein is F-box protein GID2 (GID2).